The sequence spans 122 residues: Small ribosomal subunit protein uS13 (122 aa).

Residues 97-122 form a disordered region; it reads PVRGQRTHTNARTRKGPAKAIAGKKK.

It belongs to the universal ribosomal protein uS13 family. In terms of assembly, part of the 30S ribosomal subunit. Forms a loose heterodimer with protein S19. Forms two bridges to the 50S subunit in the 70S ribosome.

Located at the top of the head of the 30S subunit, it contacts several helices of the 16S rRNA. In the 70S ribosome it contacts the 23S rRNA (bridge B1a) and protein L5 of the 50S subunit (bridge B1b), connecting the 2 subunits; these bridges are implicated in subunit movement. Contacts the tRNAs in the A and P-sites. This chain is Small ribosomal subunit protein uS13, found in Brucella anthropi (strain ATCC 49188 / DSM 6882 / CCUG 24695 / JCM 21032 / LMG 3331 / NBRC 15819 / NCTC 12168 / Alc 37) (Ochrobactrum anthropi).